A 422-amino-acid polypeptide reads, in one-letter code: 2-(3-amino-3-carboxypropyl)histidine synthase subunit 1 (422 aa).

Positions 128, 234, and 363 each coordinate [4Fe-4S] cluster.

It belongs to the DPH1/DPH2 family. DPH1 subfamily. In terms of assembly, component of the 2-(3-amino-3-carboxypropyl)histidine synthase complex composed of DPH1, DPH2, DPH3 and a NADH-dependent reductase, predominantly CBR1. [4Fe-4S] cluster serves as cofactor.

The protein resides in the cytoplasm. It catalyses the reaction L-histidyl-[translation elongation factor 2] + S-adenosyl-L-methionine = 2-[(3S)-amino-3-carboxypropyl]-L-histidyl-[translation elongation factor 2] + S-methyl-5'-thioadenosine + H(+). It functions in the pathway protein modification; peptidyl-diphthamide biosynthesis. In terms of biological role, catalyzes the first step of diphthamide biosynthesis, a post-translational modification of histidine which occurs in elongation factor 2. DPH1 and DPH2 transfer a 3-amino-3-carboxypropyl (ACP) group from S-adenosyl-L-methionine (SAM) to a histidine residue, the reaction is assisted by a reduction system comprising DPH3 and a NADH-dependent reductase, predominantly CBR1. The sequence is that of 2-(3-amino-3-carboxypropyl)histidine synthase subunit 1 (DPH1) from Kluyveromyces lactis (strain ATCC 8585 / CBS 2359 / DSM 70799 / NBRC 1267 / NRRL Y-1140 / WM37) (Yeast).